The primary structure comprises 101 residues: Small ribosomal subunit protein uS14 (101 aa).

This sequence belongs to the universal ribosomal protein uS14 family. Part of the 30S ribosomal subunit. Contacts proteins S3 and S10.

Functionally, binds 16S rRNA, required for the assembly of 30S particles and may also be responsible for determining the conformation of the 16S rRNA at the A site. In Acinetobacter baylyi (strain ATCC 33305 / BD413 / ADP1), this protein is Small ribosomal subunit protein uS14.